The chain runs to 116 residues: UPF0102 protein IL0423 (116 aa).

The protein belongs to the UPF0102 family.

The sequence is that of UPF0102 protein IL0423 from Idiomarina loihiensis (strain ATCC BAA-735 / DSM 15497 / L2-TR).